The primary structure comprises 370 residues: Aminomethyltransferase (370 aa).

It belongs to the GcvT family. As to quaternary structure, the glycine cleavage system is composed of four proteins: P, T, L and H.

The enzyme catalyses N(6)-[(R)-S(8)-aminomethyldihydrolipoyl]-L-lysyl-[protein] + (6S)-5,6,7,8-tetrahydrofolate = N(6)-[(R)-dihydrolipoyl]-L-lysyl-[protein] + (6R)-5,10-methylene-5,6,7,8-tetrahydrofolate + NH4(+). Functionally, the glycine cleavage system catalyzes the degradation of glycine. The protein is Aminomethyltransferase of Leptospira biflexa serovar Patoc (strain Patoc 1 / Ames).